A 1022-amino-acid chain; its full sequence is Histone-lysine N-methyltransferase TRX1 (1022 aa).

The interval 31-151 (SSAPCPLPKK…QRQGVHKEAA (121 aa)) is disordered. Residues 65 to 78 (EGPPPSPATAPPML) show a composition bias toward pro residues. Basic and acidic residues predominate over residues 127-139 (GGAERRGYFSEPK). The region spanning 264–327 (PGDLVWAKLT…LKQAVPFLNG (64 aa)) is the PWWP domain. The span at 367-393 (SMEKGSSDANSNKDVHSCDNLSEDKTA) shows a compositional bias: basic and acidic residues. The tract at residues 367–399 (SMEKGSSDANSNKDVHSCDNLSEDKTAESGGDY) is disordered. The FYR N-terminal domain maps to 402-461 (MTPIELGNLRVSKLGRIVTDSDYFHNKKHIWPEGYTAFRKFRSVKDPHVVILYKMEVLRN). The region spanning 465-548 (KARPLFRVTS…SCLKYFENAG (84 aa)) is the FYR C-terminal domain. The Phorbol-ester/DAG-type zinc finger occupies 553 to 609 (GYRAVHVNWKDLDYCSVCDMDEEYEDNLFLQCDKCRMMVHARCYGELEPLNGVLWLC). PHD-type zinc fingers lie at residues 564–615 (LDYC…CRPE) and 677–744 (LLCS…KKHR). The tract at residues 620–744 (SPRCCLCPVT…RLLSYCKKHR (125 aa)) is extended PHD domain (ePHD). Residues 861-979 (RRLAFGKSRI…PWEELTYDYR (119 aa)) form the SET domain. A Zn(2+)-binding site is contributed by C943. Y978 contacts S-adenosyl-L-methionine. A Post-SET domain is found at 985–1001 (QRLPCYCGFPKCRGVVN). Zn(2+) contacts are provided by C989, C991, and C996.

The protein belongs to the class V-like SAM-binding methyltransferase superfamily. Histone-lysine methyltransferase family. TRX/MLL subfamily. As to quaternary structure, interacts with EHD3. Expressed in leaf blades and panicles.

Its subcellular location is the nucleus. It carries out the reaction L-lysyl(4)-[histone H3] + S-adenosyl-L-methionine = N(6)-methyl-L-lysyl(4)-[histone H3] + S-adenosyl-L-homocysteine + H(+). Its function is as follows. Possesses histone H3 methyltransferase activity in vitro. Methylates 'Lys-4' of histone H3. H3 'Lys-4' methylation represents a specific tag for epigenetic transcriptional activation. Functions as a receptor for the lipid messenger phosphatidylinositol 5-phosphate (PI5P), which negatively regulates its transcriptional activation activity. Involved in the regulation of flowering time and floral induction under long day (LD) conditions. Acts as an activator of flowering under LD conditions. May function through binding to EHD3, a repressor of GHD7. This Oryza sativa subsp. japonica (Rice) protein is Histone-lysine N-methyltransferase TRX1.